A 305-amino-acid polypeptide reads, in one-letter code: Beta-lactamase ROB-1 (305 aa).

Positions 1-33 are cleaved as a signal peptide; sequence MLNKLKIGTLLLLTLTACSPNSVHSVTSNPQPA. Catalysis depends on serine 86, which acts as the Acyl-ester intermediate. 248-250 serves as a coordination point for substrate; the sequence is KSG.

Belongs to the class-A beta-lactamase family.

It catalyses the reaction a beta-lactam + H2O = a substituted beta-amino acid. This chain is Beta-lactamase ROB-1 (rob1), found in Actinobacillus pleuropneumoniae (Haemophilus pleuropneumoniae).